A 159-amino-acid chain; its full sequence is Cyclic pyranopterin monophosphate synthase (159 aa).

Substrate contacts are provided by residues 75 to 77 (LCH) and 113 to 114 (ME). Asp128 is a catalytic residue.

It belongs to the MoaC family. In terms of assembly, homohexamer; trimer of dimers.

The enzyme catalyses (8S)-3',8-cyclo-7,8-dihydroguanosine 5'-triphosphate = cyclic pyranopterin phosphate + diphosphate. Its pathway is cofactor biosynthesis; molybdopterin biosynthesis. Its function is as follows. Catalyzes the conversion of (8S)-3',8-cyclo-7,8-dihydroguanosine 5'-triphosphate to cyclic pyranopterin monophosphate (cPMP). The sequence is that of Cyclic pyranopterin monophosphate synthase from Yersinia pseudotuberculosis serotype O:1b (strain IP 31758).